We begin with the raw amino-acid sequence, 260 residues long: Thiazole synthase (260 aa).

Catalysis depends on Lys96, which acts as the Schiff-base intermediate with DXP. 1-deoxy-D-xylulose 5-phosphate-binding positions include Gly157, 184-185 (AG), and 206-207 (NT).

It belongs to the ThiG family. Homotetramer. Forms heterodimers with either ThiH or ThiS.

The protein localises to the cytoplasm. The enzyme catalyses [ThiS sulfur-carrier protein]-C-terminal-Gly-aminoethanethioate + 2-iminoacetate + 1-deoxy-D-xylulose 5-phosphate = [ThiS sulfur-carrier protein]-C-terminal Gly-Gly + 2-[(2R,5Z)-2-carboxy-4-methylthiazol-5(2H)-ylidene]ethyl phosphate + 2 H2O + H(+). It functions in the pathway cofactor biosynthesis; thiamine diphosphate biosynthesis. Functionally, catalyzes the rearrangement of 1-deoxy-D-xylulose 5-phosphate (DXP) to produce the thiazole phosphate moiety of thiamine. Sulfur is provided by the thiocarboxylate moiety of the carrier protein ThiS. In vitro, sulfur can be provided by H(2)S. The polypeptide is Thiazole synthase (Rhodopseudomonas palustris (strain BisB18)).